A 189-amino-acid chain; its full sequence is Probable RNA 2'-phosphotransferase (189 aa).

This sequence belongs to the KptA/TPT1 family.

In terms of biological role, removes the 2'-phosphate from RNA via an intermediate in which the phosphate is ADP-ribosylated by NAD followed by a presumed transesterification to release the RNA and generate ADP-ribose 1''-2''-cyclic phosphate (APPR&gt;P). May function as an ADP-ribosylase. This chain is Probable RNA 2'-phosphotransferase, found in Streptomyces griseus subsp. griseus (strain JCM 4626 / CBS 651.72 / NBRC 13350 / KCC S-0626 / ISP 5235).